Consider the following 258-residue polypeptide: MASKQYEEALQKANLSDMAERYDDMAKEMRLAVTLAHEDKHILNVMARNLFSVAYKNLVSSRRSSWRMLCSERQKLEGKDPSVVHVINEKIKVVEEELLRFCDEVLDIITTYILSLEEAQKNIEYNIFFLKMKGDYYRYKAEVVTGPEHSEVSKHAAESYKEATEKAKTLPPTNPIKLGLALNYSVFHYEILNDSEKACSIAKGAFDEAIKELDTLSEEHYRDSTLIMQLLRDNLTLWTSREEGNVMGDEGKGDPDEN.

Belongs to the 14-3-3 family.

In Encephalitozoon cuniculi (strain GB-M1) (Microsporidian parasite), this protein is 14-3-3 protein homolog.